The sequence spans 257 residues: DNA-binding and peroxide stress resistance protein YaaA (257 aa).

The Helix-hairpin-helix signature appears at 35-66; sequence IGIARKLSAPQIGKLMSISDKLADLNATRFHD.

Belongs to the UPF0246 family.

It is found in the cytoplasm. Its function is as follows. Protects bacteria from neutrophil-related defense upon infection of mammals. Binds DNA. The polypeptide is DNA-binding and peroxide stress resistance protein YaaA (Klebsiella pneumoniae subsp. pneumoniae (strain HS11286)).